Consider the following 137-residue polypeptide: Large-conductance mechanosensitive channel (137 aa).

2 helical membrane passes run 10 to 30 and 76 to 96; these read FAMR…AAFG and GVFI…FVAI.

The protein belongs to the MscL family. Homopentamer.

The protein localises to the cell inner membrane. Its function is as follows. Channel that opens in response to stretch forces in the membrane lipid bilayer. May participate in the regulation of osmotic pressure changes within the cell. The polypeptide is Large-conductance mechanosensitive channel (Salmonella choleraesuis (strain SC-B67)).